We begin with the raw amino-acid sequence, 404 residues long: Cysteine desulfurase IscS (404 aa).

Pyridoxal 5'-phosphate contacts are provided by residues 75–76, Asn155, Gln183, and 203–205; these read AT and SGH. Lys206 is subject to N6-(pyridoxal phosphate)lysine. Pyridoxal 5'-phosphate is bound at residue Thr243. Cys328 serves as the catalytic Cysteine persulfide intermediate. Cys328 contributes to the [2Fe-2S] cluster binding site.

This sequence belongs to the class-V pyridoxal-phosphate-dependent aminotransferase family. NifS/IscS subfamily. In terms of assembly, homodimer. Forms a heterotetramer with IscU, interacts with other sulfur acceptors. The cofactor is pyridoxal 5'-phosphate.

The protein resides in the cytoplasm. The catalysed reaction is (sulfur carrier)-H + L-cysteine = (sulfur carrier)-SH + L-alanine. It functions in the pathway cofactor biosynthesis; iron-sulfur cluster biosynthesis. Functionally, master enzyme that delivers sulfur to a number of partners involved in Fe-S cluster assembly, tRNA modification or cofactor biosynthesis. Catalyzes the removal of elemental sulfur atoms from cysteine to produce alanine. Functions as a sulfur delivery protein for Fe-S cluster synthesis onto IscU, an Fe-S scaffold assembly protein, as well as other S acceptor proteins. This is Cysteine desulfurase IscS from Mannheimia succiniciproducens (strain KCTC 0769BP / MBEL55E).